The sequence spans 285 residues: Ribonuclease H1 (285 aa).

The disordered stretch occupies residues 72-126; sequence RSSSSPDGSKGQESAHEQKSQAKTSKRPREPLGEGEELPEPGPKHTRQDTEPAAV. In terms of domain architecture, RNase H type-1 spans 135–281; sequence MGESVIVYTD…ADRLAREGAK (147 aa). Mg(2+)-binding residues include Asp-144, Glu-185, Asp-209, and Asp-273.

This sequence belongs to the RNase H family. In terms of assembly, monomer. Mg(2+) serves as cofactor.

Its subcellular location is the cytoplasm. It catalyses the reaction Endonucleolytic cleavage to 5'-phosphomonoester.. Its activity is regulated as follows. In the presence of magnesium, manganese is inhibitory. Endonuclease that specifically degrades the RNA of RNA-DNA hybrids. Plays a role in RNA polymerase II (RNAp II) transcription termination by degrading R-loop RNA-DNA hybrid formation at G-rich pause sites located downstream of the poly(A) site and behind the elongating RNAp II. The chain is Ribonuclease H1 (Rnaseh1) from Mus musculus (Mouse).